Here is a 362-residue protein sequence, read N- to C-terminus: Chromobox protein homolog 8 (362 aa).

In terms of domain architecture, Chromo spans 11–69 (FAAEALLKRRIRKGRMEYLVKWKGWSQKYSTWEPEENILDARLLAAFEEREREMELYGP). The segment covering 90–100 (KTYEFRSDSTR) has biased composition (basic and acidic residues). Residues 90-197 (KTYEFRSDST…LGEPSAGLGE (108 aa)) are disordered. Position 110 is a phosphoserine (Ser110). Over residues 142-162 (DPPRDRDRERDRGTSRVDDKP) the composition is skewed to basic and acidic residues. Phosphoserine is present on residues Ser164 and Ser229. Tyr234 carries the post-translational modification Phosphotyrosine. 4 positions are modified to phosphoserine: Ser238, Ser284, Ser305, and Ser325.

In terms of assembly, component of a PRC1-like complex. Interacts with RING1, RNF2, PCGF1, PCGF2, PCGF3, BMI1, PCGF5, PCGF6 and PHC2. Interacts with histone H3. Interacts with MLLT3. Interacts with PHC2. Interacts (via chromodomain) with single-stranded RNA.

The protein localises to the nucleus. The protein resides in the chromosome. Component of a Polycomb group (PcG) multiprotein PRC1-like complex, a complex class required to maintain the transcriptionally repressive state of many genes, including Hox genes, throughout development. PcG PRC1 complex acts via chromatin remodeling and modification of histones; it mediates monoubiquitination of histone H2A 'Lys-119', rendering chromatin heritably changed in its expressibility. The sequence is that of Chromobox protein homolog 8 (Cbx8) from Mus musculus (Mouse).